Here is a 172-residue protein sequence, read N- to C-terminus: MEYFNVGKIVNTQGLQGEMRVLSVSDFTEERFQKGARLALFDDKDRFVQEVEIASHRKHKQFDIIKFKGMYHINAIEQFKGCSLKIAKEHQGKLAEGEFYYHQIIGLEVYEKDQLVGQIKEILQPGANDVWVVKRQSKRDLLLPYIPSVVLGVDIEKGRVDVEIMEGLDDED.

A PRC barrel domain is found at 95–168 (AEGEFYYHQI…RVDVEIMEGL (74 aa)).

It belongs to the RimM family. In terms of assembly, binds ribosomal protein uS19.

Its subcellular location is the cytoplasm. Its function is as follows. An accessory protein needed during the final step in the assembly of 30S ribosomal subunit, possibly for assembly of the head region. Essential for efficient processing of 16S rRNA. May be needed both before and after RbfA during the maturation of 16S rRNA. It has affinity for free ribosomal 30S subunits but not for 70S ribosomes. The polypeptide is Ribosome maturation factor RimM (Streptococcus equi subsp. zooepidemicus (strain H70)).